Here is a 505-residue protein sequence, read N- to C-terminus: Actin nucleation-promoting factor WASL (505 aa).

Ser-2 carries the post-translational modification N-acetylserine. Positions 34–141 constitute a WH1 domain; it reads LGKKCVTMSS…KAVTDLLGRR (108 aa). Disordered regions lie at residues 138 to 163 and 185 to 205; these read LGRR…ATVD and TKEK…DIGT. A compositionally biased stretch (basic residues) spans 186–198; it reads KEKKKGKAKKKRL. The region spanning 203-216 is the CRIB domain; it reads IGTPSNFQHIGHVG. Ser-242 carries the phosphoserine; by TNK2 modification. Tyr-256 bears the Phosphotyrosine; by FAK1 and TNK2 mark. 3 disordered regions span residues 266–406, 449–468, and 477–505; these read EAVK…AGSK, SVTD…SGIV, and KRSK…EWED. Pro residues-rich tracts occupy residues 276–349, 356–365, and 372–391; these read APPP…PLPA, SGPPPPPPPL, and APPP…PPGL. Omega-N-methylarginine is present on Arg-307. 2 WH2 domains span residues 405–422 and 433–450; these read SKAA…LKKV and GRDA…LKSV. Phosphoserine is present on residues Ser-484 and Ser-485. Residues 486-505 show a composition bias toward acidic residues; the sequence is DEDEDEDDDEDFEDDDEWED.

As to quaternary structure, binds actin and the Arp2/3 complex. Interacts with CDC42. Interacts with FCHSD1. Interacts with FCHSD2. Binds to SH3 domains of GRB2. Interacts with the C-terminal SH3 domain of DNMBP. Interacts with SNX9. Interacts with the WW domains of PRPF40A/FBP11. Interacts with PTK2/FAK1. Interacts with PACSIN1, PACSIN2 and PACSIN3. Interacts with NOSTRIN. Binds to TNK2. Interacts with SNX33. Interacts with NONO (via second RRM domain); the interaction is direct. Component of a multiprotein complex with NONO and SFPQ; associates with the complex via direct interaction with NONO. Post-translationally, phosphorylation at Ser-242, Tyr-256, Ser-484 and Ser-485 enhances actin polymerization activity.

It localises to the cytoplasm. It is found in the cytoskeleton. The protein resides in the nucleus. Its function is as follows. Regulates actin polymerization by stimulating the actin-nucleating activity of the Arp2/3 complex. Involved in various processes, such as mitosis and cytokinesis, via its role in the regulation of actin polymerization. Together with CDC42, involved in the extension and maintenance of the formation of thin, actin-rich surface projections called filopodia. In addition to its role in the cytoplasm, also plays a role in the nucleus by regulating gene transcription, probably by promoting nuclear actin polymerization. Binds to HSF1/HSTF1 and forms a complex on heat shock promoter elements (HSE) that negatively regulates HSP90 expression. Plays a role in dendrite spine morphogenesis. The polypeptide is Actin nucleation-promoting factor WASL (WASL) (Bos taurus (Bovine)).